A 432-amino-acid polypeptide reads, in one-letter code: Monooxygenase penA (432 aa).

Residues 7-29 form a helical membrane-spanning segment; it reads FKIAIIGAGPAGLTLASLLTASP. Asparagine 33 carries an N-linked (GlcNAc...) asparagine glycan.

The protein belongs to the aromatic-ring hydroxylase family. FAD serves as cofactor.

It is found in the membrane. Its pathway is secondary metabolite biosynthesis. The protein operates within alkaloid biosynthesis. It functions in the pathway mycotoxin biosynthesis. Functionally, monooxygenase; part of the gene cluster that mediates the biosynthesis of penigequinolones, potent insecticidal alkaloids that contain a highly modified 10-carbon prenyl group. The first stage is catalyzed by the nonribosomal peptide synthetase penN that condenses anthranilic acid and O-methyl-L-tyrosine to produce 4'-methoxycyclopeptin. 4'-methoxycyclopeptin is then converted to 4'-methoxydehydrocyclopeptin by the ketoglutarate-dependent dioxygenase penM through dehydrogenation to form a double bond between C-alpha and C-beta of the O-methyltyrosine side chain. PenM also converts its first product methoxydehydrocyclopeptin to 4'-methoxycyclopenin. The following conversion of 4'methoxycyclopenin into 4'-methoxyviridicatin is catalyzed by the cyclopenase penL. 4'-methoxyviridicatin is the precursor of quinolone natural products, and is further converted to quinolinone B. The prenyltransferase penI then catalyzes the canonical Friedel-Crafts alkylation of quinolinone B with dimethylallyl cation to yield dimethylallyl quinolone, which is subjected to FAD-dependent dehydrogenation by the FAD-linked oxidoreductase penH to yield conjugated aryl diene. The delta(3') double bond then serves as the site of the second alkylation with DMAPP catalyzed by the prenyltransferase penG to yield a carbenium ion intermediate, which can be attacked by H(2)O to yield a styrenyl quinolone containing a C3'-hydroxyprenyl chain, or undergo cyclization to yield yaequinolones J1 and J2. The conversion of the styrenyl quinolone into the tetrahydrofuran-containing yaequinolone C is performed by the FAD-dependent monooxygenase penE and involves epoxidation of the terminal C7'-C8' olefin, followed by epoxide ring opening initiated by the C3' hydroxyl group. The predicted cysteine hydrolase penJ acts as an epoxide hydrolase that enhances the rate of the 5-exo-tet cyclization step, increasing the yield of yaequinolone C. PenF catalyzes the cationic rearrangement of the epoxide formed by penE (before ring opening to produce yaequinolone C) into yaequinolone D. Finally, the short-chain dehydrogenase/reductase (SDR)-like reductase penD, catalyzes both the dehydration of yaequinolone D and the reduction of the resulting oxonium to yield penigequinolone. The polypeptide is Monooxygenase penA (Penicillium thymicola).